Consider the following 871-residue polypeptide: Alanine--tRNA ligase (871 aa).

Residues His590, His594, Cys694, and His698 each contribute to the Zn(2+) site.

The protein belongs to the class-II aminoacyl-tRNA synthetase family. Requires Zn(2+) as cofactor.

The protein localises to the cytoplasm. It catalyses the reaction tRNA(Ala) + L-alanine + ATP = L-alanyl-tRNA(Ala) + AMP + diphosphate. Its function is as follows. Catalyzes the attachment of alanine to tRNA(Ala) in a two-step reaction: alanine is first activated by ATP to form Ala-AMP and then transferred to the acceptor end of tRNA(Ala). Also edits incorrectly charged Ser-tRNA(Ala) and Gly-tRNA(Ala) via its editing domain. This Thermoplasma acidophilum (strain ATCC 25905 / DSM 1728 / JCM 9062 / NBRC 15155 / AMRC-C165) protein is Alanine--tRNA ligase.